The following is a 612-amino-acid chain: MPAYRSRTTTHGRNMAGARGLWRATGMKDSDFGKPIIAVVNSFTQFVPGHVHLKDLGQLVAREIEAAGGVAKEFNTIAVDDGIAMGHDGMLYSLPSREIIADSVEYMVNAHCADAMVCISNCDKITPGMLMAALRLNIPAVFVSGGPMEAGKVVLHGKTHALDLVDAMVAAADDKVSDEDVQIIERSACPTCGSCSGMFTANSMNCLTEALGLSLPGNGSTLATHADRKRLFVEAGHLIVDIARRYYEQEDERVLPRSIASKQAFENAMALDIAMGGSTNTVLHILAAAYEGEIDFTMDDIDRLSRKVPCLSKVAPAKADVHMEDVHRAGGIMSILGELDKGGLINRDCPTVHAETLGDAIDRWDITRTSSETVRNFFRAAPGGIPTQTAFSQAARWDELDTDRQNGVIRSVEHPFSKDGGLAVLKGNIALDGCIVKTAGVDESILKFSGPARVFESQDSAVKGILANEVKAGDVVVIRYEGPKGGPGMQEMLYPTSYLKSKGLGKACALITDGRFSGGTSGLSIGHVSPEAANGGTIGLVREGDMIDIDIPNRTIVLRVDEAELAARRKEQDAKGWKPVEQRKRRVTTALKAYAAFATSADRGAVRDLGDR.

Position 81 (aspartate 81) interacts with Mg(2+). [2Fe-2S] cluster is bound at residue cysteine 122. 2 residues coordinate Mg(2+): aspartate 123 and lysine 124. At lysine 124 the chain carries N6-carboxylysine. Cysteine 195 contacts [2Fe-2S] cluster. Glutamate 491 is a Mg(2+) binding site. Serine 517 acts as the Proton acceptor in catalysis.

Belongs to the IlvD/Edd family. In terms of assembly, homodimer. It depends on [2Fe-2S] cluster as a cofactor. Mg(2+) serves as cofactor.

The catalysed reaction is (2R)-2,3-dihydroxy-3-methylbutanoate = 3-methyl-2-oxobutanoate + H2O. The enzyme catalyses (2R,3R)-2,3-dihydroxy-3-methylpentanoate = (S)-3-methyl-2-oxopentanoate + H2O. Its pathway is amino-acid biosynthesis; L-isoleucine biosynthesis; L-isoleucine from 2-oxobutanoate: step 3/4. It functions in the pathway amino-acid biosynthesis; L-valine biosynthesis; L-valine from pyruvate: step 3/4. In terms of biological role, functions in the biosynthesis of branched-chain amino acids. Catalyzes the dehydration of (2R,3R)-2,3-dihydroxy-3-methylpentanoate (2,3-dihydroxy-3-methylvalerate) into 2-oxo-3-methylpentanoate (2-oxo-3-methylvalerate) and of (2R)-2,3-dihydroxy-3-methylbutanoate (2,3-dihydroxyisovalerate) into 2-oxo-3-methylbutanoate (2-oxoisovalerate), the penultimate precursor to L-isoleucine and L-valine, respectively. The chain is Dihydroxy-acid dehydratase from Sinorhizobium medicae (strain WSM419) (Ensifer medicae).